Reading from the N-terminus, the 302-residue chain is Probable proteasome inhibitor (302 aa).

N-acetylalanine is present on alanine 2. 2 disordered regions span residues 151 to 188 and 259 to 302; these read LDGK…QIHP and ARFD…SDFI. A compositionally biased stretch (pro residues) spans 259–269; the sequence is ARFDPYGPPGV.

The protein belongs to the proteasome inhibitor PI31 family.

Functionally, could play an important role in control of proteasome function. Inhibits the hydrolysis of protein and peptide substrates by the 20S proteasome. This is Probable proteasome inhibitor from Arabidopsis thaliana (Mouse-ear cress).